The following is a 182-amino-acid chain: ATP-dependent protease subunit HslV (182 aa).

T10 is an active-site residue. Residues A166, C169, and S172 each coordinate Na(+).

Belongs to the peptidase T1B family. HslV subfamily. In terms of assembly, a double ring-shaped homohexamer of HslV is capped on each side by a ring-shaped HslU homohexamer. The assembly of the HslU/HslV complex is dependent on binding of ATP.

Its subcellular location is the cytoplasm. The enzyme catalyses ATP-dependent cleavage of peptide bonds with broad specificity.. Allosterically activated by HslU binding. Functionally, protease subunit of a proteasome-like degradation complex believed to be a general protein degrading machinery. The chain is ATP-dependent protease subunit HslV from Rickettsia peacockii (strain Rustic).